Reading from the N-terminus, the 339-residue chain is uncharacterized protein (339 aa).

The segment covering 1-12 (MDIDLNNQTDNN) has biased composition (polar residues). Positions 1–30 (MDIDLNNQTDNNELIVEDTENPKNPNSTNI) are disordered.

This is an uncharacterized protein from Acanthamoeba polyphaga (Amoeba).